The following is a 233-amino-acid chain: MLEKCPIIALDFSDLASVTTFLEHFPKEELLFVKIGMELYYSEGPSIIRYIKSLGHRIFLDLKLHDIPNTVRSSMSVLAKLGIDMTNVHAAGGVEMMKAAREGLGKGPILLAVTQLTSTSQEQMQVDQHINLSVVDSVCHYAQKAQEAGLDGVVASAQEGMQIKKQTNEHFICLTPGIRPPQTNQLDDQKRTMTPEQARIVGADYIVVGRPITKAENPYQAYLEIKEEWNRIK.

Substrate-binding positions include Asp11, Lys34, 61–70 (DLKLHDIPNT), Thr117, Arg179, Gln189, Gly209, and Arg210. The active-site Proton donor is the Lys63.

Belongs to the OMP decarboxylase family. Type 1 subfamily. In terms of assembly, homodimer.

It carries out the reaction orotidine 5'-phosphate + H(+) = UMP + CO2. The protein operates within pyrimidine metabolism; UMP biosynthesis via de novo pathway; UMP from orotate: step 2/2. Catalyzes the decarboxylation of orotidine 5'-monophosphate (OMP) to uridine 5'-monophosphate (UMP). This Streptococcus agalactiae serotype V (strain ATCC BAA-611 / 2603 V/R) protein is Orotidine 5'-phosphate decarboxylase.